The sequence spans 407 residues: MPRGQKSKLRARGKRRETHDQPQGLTGPQATAEKQEESRSSSSSSAVCQGARRRSSGSSVPQESQGASPTGYPDAGASCSKYDVAAMGQDEKSPSTSRDASVSQESQGASPIGPPDAGISCSKSDEAAKGQNEKSPSTSRDASVPQESQGASPTGSPDADVSGSKSDVAAKGQDEESLSSSKRAAFFTTTDGDPIKRKANKMVQFLQKKFEKKEPILKADMLKRLRRQYKPCFPEILKRTSEHLTVFFGVELKETDSSGESYTLVSKLGLSNEGSLSGDNALPKSGLLMSILGLIFMRGNRATEEEVWKFLGLLGIYDGILHSIYGDARKIITEDLVQDKYVVYRQVCNSDPPCYEFLWGPRAYAETTKMRVLRVLAEINNTSPGLYPHLYEDALTDEVERALRLRA.

Positions 1-16 (MPRGQKSKLRARGKRR) are enriched in basic residues. Residues 1 to 185 (MPRGQKSKLR…ESLSSSKRAA (185 aa)) are disordered. Composition is skewed to polar residues over residues 56–68 (SGSS…QGAS) and 94–109 (PSTS…SQGA). A compositionally biased stretch (basic and acidic residues) spans 123–132 (KSDEAAKGQN). A compositionally biased stretch (polar residues) spans 133–155 (EKSPSTSRDASVPQESQGASPTG). Residues 195–394 (IKRKANKMVQ…GLYPHLYEDA (200 aa)) form the MAGE domain.

The sequence is that of Melanoma-associated antigen B6B from Homo sapiens (Human).